The following is a 173-amino-acid chain: Globin, cuticular isoform (173 aa).

An N-terminal signal peptide occupies residues 1-16; that stretch reads MLWFVAVCFAIASVSA. Residues 17–166 form the Globin domain; that stretch reads MSPADVKKHT…FNSEAQHQLE (150 aa). H113 is a heme b binding site.

It belongs to the globin family. In terms of tissue distribution, expressed only by adult nematodes in the gut.

The protein resides in the secreted. It localises to the extracellular space. The sequence is that of Globin, cuticular isoform (GLBC) from Nippostrongylus brasiliensis (Rat hookworm).